The primary structure comprises 447 residues: UDP-N-acetyl-alpha-D-muramoyl-L-alanyl-L-glutamate epimerase (447 aa).

This sequence belongs to the MurL family.

The catalysed reaction is UDP-N-acetyl-alpha-D-muramoyl-L-alanyl-L-glutamate + ATP + H2O = UDP-N-acetyl-alpha-D-muramoyl-L-alanyl-D-glutamate + AMP + diphosphate + H(+). It functions in the pathway cell wall biogenesis; peptidoglycan biosynthesis. Functionally, cell wall formation. Catalyzes epimerization of the terminal L-glutamate in UDP-N-acetyl-alpha-D-muramoyl-L-alanyl-L-glutamate. In Micromonospora sp. (strain ATCC 39149 / NRRL 15099 / SCC 1413), this protein is UDP-N-acetyl-alpha-D-muramoyl-L-alanyl-L-glutamate epimerase.